Here is a 562-residue protein sequence, read N- to C-terminus: Arginine--tRNA ligase (562 aa).

The 'HIGH' region signature appears at 126–136; the sequence is ANPTGPLNVGH.

This sequence belongs to the class-I aminoacyl-tRNA synthetase family. In terms of assembly, monomer.

The protein resides in the cytoplasm. The catalysed reaction is tRNA(Arg) + L-arginine + ATP = L-arginyl-tRNA(Arg) + AMP + diphosphate. This is Arginine--tRNA ligase from Salinibacter ruber (strain DSM 13855 / M31).